Consider the following 249-residue polypeptide: Benzil reductase ((S)-benzoin forming) (249 aa).

Positions 6, 87, 154, 158, 189, and 191 each coordinate NADP(+). The active-site Proton acceptor is the Tyr154.

Belongs to the short-chain dehydrogenases/reductases (SDR) family.

Its subcellular location is the cytoplasm. It carries out the reaction (S)-benzoin + NADP(+) = benzil + NADPH + H(+). The catalysed reaction is 2-hydroxy-1-phenyl-1-propanone + NADP(+) = 1-phenyl-1,2-propanedione + NADPH + H(+). Inhibited by Cibacron blue 3GA, a general SDR family inhibitor. Its function is as follows. Reduces benzil stereospecifically to (S)-benzoin. Can also reduce 1-phenyl-1,2-propanedione, 1,4-naphthoquinone, 1-(4-methyl-phenyl)-2-phenyl-ethane-1,2-dione, 1-(4-fluoro-phenyl)-2-phenyl-ethane-1,2-dione, methyl benzoylformate and p-nitrobenzaldehyde in decreasing order. The chain is Benzil reductase ((S)-benzoin forming) from Bacillus cereus.